A 1213-amino-acid chain; its full sequence is Protein jagged-1b (1213 aa).

An N-terminal signal peptide occupies residues 1-26; that stretch reads MILRRSSVFSAFYLHAFLLCLRTTVS. The Extracellular portion of the chain corresponds to 27-1064; that stretch reads DASGHFELEI…HQIPSPKTDY (1038 aa). The N-linked (GlcNAc...) asparagine glycan is linked to N139. The 45-residue stretch at 182–226 folds into the DSL domain; the sequence is VTCLEHYYGFGCNKFCRPRDEFFGHYTCDQNGNKTCLEGWTGPDC. 2 cysteine pairs are disulfide-bonded: C184–C193 and C197–C209. The N-linked (GlcNAc...) asparagine glycan is linked to N214. 39 cysteine pairs are disulfide-bonded: C217-C226, C231-C242, C235-C248, C250-C259, C262-C273, C268-C279, C281-C290, C297-C309, C303-C319, C321-C330, C337-C348, C342-C357, C359-C368, C375-C386, C380-C395, C397-C406, C413-C424, C418-C433, C435-C444, C451-C461, C455-C470, C472-C481, C488-C499, C493-C508, C510-C519, C526-C537, C531-C546, C548-C557, C596-C612, C614-C623, C630-C641, C635-C650, C652-C661, C668-C679, C673-C688, C690-C699, C706-C717, C711-C726, and C728-C737. In terms of domain architecture, EGF-like 1 spans 227–260; sequence NTAICRQGCSTEHGSCKQPGGCKCLYGWQGPYCD. In terms of domain architecture, EGF-like 2; atypical spans 261–291; that stretch reads KCIPHPGCVHGTCVEPWQCLCDTNWGGQLCD. 2 consecutive EGF-like domains span residues 293 to 331 and 333 to 369; these read DLNYCGTHQPCLNGGTCSNTGPDKYQCSCEDGYSGVNCE and AEHACLSNPCANGGTCKETSQGYECHCAIGWSGTSCE. The region spanning 371–407 is the EGF-like 5; calcium-binding domain; the sequence is NVDDCTPNQCKHGGTCQDLVNGFKCACPPHWTGKTCQ. The EGF-like 6; calcium-binding domain maps to 409 to 445; the sequence is DANECEDKPCVNAKSCHNLIGAYFCECLPGWSGQNCD. Positions 447–482 constitute an EGF-like 7; calcium-binding domain; sequence NINDCKGQCLNGGTCKDLVNGYRCLCPPGYTGEQCE. The region spanning 484–520 is the EGF-like 8; calcium-binding domain; that stretch reads DVDECASSPCLNGGRCQDEVNGFQCLCPAGFSGQLCQ. EGF-like domains are found at residues 522–558 and 592–624; these read DIDYCKPNPCQNGAQCFNLASDYFCKCPDDYEGKNCS and SSNVCGPHGRCRSQAGGQFTCECQEGFRGTYCH. An N-linked (GlcNAc...) asparagine glycan is attached at N556. The 37-residue stretch at 626-662 folds into the EGF-like 11; calcium-binding domain; the sequence is NINDCESNPCRNGGTCIDKVNVYQCICADGWEGVHCE. Residues 664-700 form the EGF-like 12; calcium-binding domain; the sequence is NIDDCSLNPCLNKGACQDLVNDFYCECRNGWKGKTCH. Residues 702 to 738 enclose the EGF-like 13 domain; it reads RDSQCDEATCNNGGTCHDEGDTFKCRCSPGWEGATCN. N742 is a glycosylation site (N-linked (GlcNAc...) asparagine). Cystine bridges form between C745–C756, C750–C765, C767–C776, C783–C794, C788–C803, C805–C814, C821–C832, C826–C841, and C843–C852. The EGF-like 14 domain maps to 746 to 777; it reads LPNPCENGGTCVVNGDSFNCVCKEGWEGSTCT. One can recognise an EGF-like 15; calcium-binding domain in the interval 779 to 815; it reads NTNDCNPHPCYNSGTCVDGENWYRCECAPGFAGPDCR. Residues 817 to 853 form the EGF-like 16; calcium-binding domain; sequence NINECQSSPCAFGSTCVDEINGYRCLCPPGRIGPDCQ. In terms of domain architecture, VWFC spans 860–914; sequence CIANGQVTADGAKWEEDCNICQCQNGRIHCTMMWCGPKSCRIGKARGGCPASQSC. The region spanning 918-956 is the EGF-like 17 domain; it reads KEEQCFVKPCPSLGECWPSAPPPPSKCHASFSYQDDSCA. N957, N988, and N1042 each carry an N-linked (GlcNAc...) asparagine glycan. The helical transmembrane segment at 1065–1087 threads the bilayer; the sequence is LVPLLSSIFIVLWIFALASAFLW. Over 1088-1213 the chain is Cytoplasmic; the sequence is CIHRRRKQNT…QSLNRMEYIV (126 aa). The segment at 1181–1202 is disordered; it reads EERAPNKNPNWTNKQDNRDLET.

Its subcellular location is the membrane. It is found in the cell membrane. Ligand for Notch receptors and involved in the mediation of Notch signaling. Seems to be involved in cell-fate decisions. The chain is Protein jagged-1b (jag1b) from Danio rerio (Zebrafish).